The following is a 346-amino-acid chain: tRNA-specific 2-thiouridylase MnmA (346 aa).

6-13 (AMSGGTDS) is a binding site for ATP. C90 functions as the Nucleophile in the catalytic mechanism. Cysteines 90 and 187 form a disulfide. G114 contributes to the ATP binding site. Residues 137–139 (KDQ) form an interaction with tRNA region. Residue C187 is the Cysteine persulfide intermediate of the active site. The interval 292 to 293 (RY) is interaction with tRNA.

This sequence belongs to the MnmA/TRMU family.

It is found in the cytoplasm. It catalyses the reaction S-sulfanyl-L-cysteinyl-[protein] + uridine(34) in tRNA + AH2 + ATP = 2-thiouridine(34) in tRNA + L-cysteinyl-[protein] + A + AMP + diphosphate + H(+). Functionally, catalyzes the 2-thiolation of uridine at the wobble position (U34) of tRNA, leading to the formation of s(2)U34. This chain is tRNA-specific 2-thiouridylase MnmA, found in Nitratidesulfovibrio vulgaris (strain DP4) (Desulfovibrio vulgaris).